The primary structure comprises 146 residues: Large ribosomal subunit protein uL15 (146 aa).

Positions 1-42 are disordered; it reads MTIKLHDLQPARGSKTTRTRVGRGEASKGKTAGRGTKGTKAR.

Belongs to the universal ribosomal protein uL15 family. In terms of assembly, part of the 50S ribosomal subunit.

Its function is as follows. Binds to the 23S rRNA. In Mycobacterium leprae (strain Br4923), this protein is Large ribosomal subunit protein uL15.